A 2201-amino-acid chain; its full sequence is Activating signal cointegrator 1 complex subunit 3 (2201 aa).

Residue S12 is modified to Phosphoserine. 2 coiled-coil regions span residues 18–81 (KQDN…KQIV) and 328–356 (IQSEQEKQLMKQYRREEKRIARREKKAGE). In terms of domain architecture, Helicase ATP-binding 1 spans 486-669 (ETAYNTNENM…FLHVNPCIGL (184 aa)). Residue 499 to 506 (APTGAGKT) coordinates ATP. Position 572 is an N6-acetyllysine (K572). The DEVH box signature appears at 611-614 (DEVH). The region spanning 696–914 (QLNNMDEVCY…GTVTNVEEAV (219 aa)) is the Helicase C-terminal 1 domain. The SEC63 1 domain maps to 978 to 1287 (STDLGRTASH…GAEAVCIINF (310 aa)). Residues 1336-1511 (HTLYHTDCNV…WLNIRQMGLF (176 aa)) enclose the Helicase ATP-binding 2 domain. 1349 to 1356 (APTGSGKT) is an ATP binding site. A DEIH box motif is present at residues 1453-1456 (DEIH). Positions 1544–1739 (PTFQAIRSHS…VLSDHLNAEI (196 aa)) constitute a Helicase C-terminal 2 domain. Residues 1812–2176 (PLTYGRIASY…LGLDQQYDIH (365 aa)) form the SEC63 2 domain.

The protein belongs to the helicase family. Identified in the ASCC complex that contains ASCC1, ASCC2 and ASCC3. Functions as a scaffolding subunit that interacts directly with both ASCC1 and ASCC2. Interacts directly with ALKBH3, and thereby recruits ALKBH3 to the ASCC complex. Part of the ASC-1/TRIP4 complex, that contains TRIP4, ASCC1, ASCC2 and ASCC3. Part of the RQT (ribosome quality control trigger) complex, that contains ASCC2, ASCC3 and TRIP4. Associates with ribosomes; recruited to collided ribosomes. Interacts with ZCCHC4. Interacts with ZNF598. Interacts with RPS3.

It is found in the nucleus. The protein resides in the nucleus speckle. It localises to the cytoplasm. The protein localises to the cytosol. It catalyses the reaction Couples ATP hydrolysis with the unwinding of duplex DNA by translocating in the 3'-5' direction.. It carries out the reaction ATP + H2O = ADP + phosphate + H(+). Functionally, ATPase involved both in DNA repair and rescue of stalled ribosomes. 3'-5' DNA helicase involved in repair of alkylated DNA: promotes DNA unwinding to generate single-stranded substrate needed for ALKBH3, enabling ALKBH3 to process alkylated N3-methylcytosine (3mC) within double-stranded regions. Also involved in activation of the ribosome quality control (RQC) pathway, a pathway that degrades nascent peptide chains during problematic translation. Drives the splitting of stalled ribosomes that are ubiquitinated in a ZNF598-dependent manner, as part of the ribosome quality control trigger (RQT) complex. Part of the ASC-1 complex that enhances NF-kappa-B, SRF and AP1 transactivation. This is Activating signal cointegrator 1 complex subunit 3 (ascc3) from Bos taurus (Bovine).